Consider the following 229-residue polypeptide: Potassium/proton antiporter CemA (229 aa).

Transmembrane regions (helical) follow at residues 7-27 (FLPL…SLSF), 106-126 (MILH…YSIL), and 189-209 (IISG…KYWI).

It belongs to the CemA family.

The protein resides in the plastid. The protein localises to the chloroplast inner membrane. It catalyses the reaction K(+)(in) + H(+)(out) = K(+)(out) + H(+)(in). Functionally, contributes to K(+)/H(+) antiport activity by supporting proton efflux to control proton extrusion and homeostasis in chloroplasts in a light-dependent manner to modulate photosynthesis. Prevents excessive induction of non-photochemical quenching (NPQ) under continuous-light conditions. Indirectly promotes efficient inorganic carbon uptake into chloroplasts. This Eucalyptus globulus subsp. globulus (Tasmanian blue gum) protein is Potassium/proton antiporter CemA.